The following is a 103-amino-acid chain: Small ribosomal subunit protein uS10 (103 aa).

The protein belongs to the universal ribosomal protein uS10 family. As to quaternary structure, part of the 30S ribosomal subunit.

In terms of biological role, involved in the binding of tRNA to the ribosomes. This Dechloromonas aromatica (strain RCB) protein is Small ribosomal subunit protein uS10.